The chain runs to 73 residues: UPF0346 protein LVIS_0790 (73 aa).

It belongs to the UPF0346 family.

This Levilactobacillus brevis (strain ATCC 367 / BCRC 12310 / CIP 105137 / JCM 1170 / LMG 11437 / NCIMB 947 / NCTC 947) (Lactobacillus brevis) protein is UPF0346 protein LVIS_0790.